We begin with the raw amino-acid sequence, 347 residues long: Quinolinate synthase (347 aa).

The iminosuccinate site is built by His-47 and Ser-68. Cys-113 provides a ligand contact to [4Fe-4S] cluster. Iminosuccinate is bound by residues 139-141 (YAN) and Ser-156. Cys-200 provides a ligand contact to [4Fe-4S] cluster. Residues 226–228 (HPE) and Thr-243 each bind iminosuccinate. Residue Cys-297 participates in [4Fe-4S] cluster binding.

This sequence belongs to the quinolinate synthase family. Type 1 subfamily. It depends on [4Fe-4S] cluster as a cofactor.

It is found in the cytoplasm. It carries out the reaction iminosuccinate + dihydroxyacetone phosphate = quinolinate + phosphate + 2 H2O + H(+). The protein operates within cofactor biosynthesis; NAD(+) biosynthesis; quinolinate from iminoaspartate: step 1/1. Catalyzes the condensation of iminoaspartate with dihydroxyacetone phosphate to form quinolinate. The sequence is that of Quinolinate synthase from Escherichia coli O157:H7.